Here is a 248-residue protein sequence, read N- to C-terminus: Probable transcriptional regulatory protein BARBAKC583_0163 (248 aa).

This sequence belongs to the TACO1 family.

The protein localises to the cytoplasm. In Bartonella bacilliformis (strain ATCC 35685 / KC583 / Herrer 020/F12,63), this protein is Probable transcriptional regulatory protein BARBAKC583_0163.